The chain runs to 506 residues: MVSIRPDEISAILKQQIEDYDKSVSVSNVGSVLQVGDGIARVYGLQQVMAGELVEFEDGTEGIALNLEDDNVGAVLMGEGLGIQEGSTVRATGKIASVPVGDGLLGRVVNPLGVALDGKGDLGTTESRLIESPAPGIIQRKSVHEPMQTGITAIDAMIPIGRGQRELIIGDRQTGKTAIAIDTILNQKDQDVVCVYVAIGQKAASVAQVTEVLRERGALDYTVIVAANASDPAALQYLAPYTGASIAEYFMYKGKATLVIYDDLSKQAQAYRQMSLLLRRPPGREAYPGDVFYCHSRLLERAAKLSDAMGKGSMTALPIIETQAGDVSAYIPTNVISITDGQVFLSSDLFNSGLRPAINVGISVSRVGGAAQTKAIKKIAGTLKLELAQFDELAAFSQFASDLDAATQKQLGRGKRLRELLKQPQFSPLILAEQVAIVYAGVKGLIDDVPVDQVVQFSRELREYLKSNKPEFIEKIQTEKVLSPEAETMLKEAVAEVTSTMLATAN.

170-177 (GDRQTGKT) is a binding site for ATP.

Belongs to the ATPase alpha/beta chains family. As to quaternary structure, F-type ATPases have 2 components, CF(1) - the catalytic core - and CF(0) - the membrane proton channel. CF(1) has five subunits: alpha(3), beta(3), gamma(1), delta(1), epsilon(1). CF(0) has four main subunits: a(1), b(1), b'(1) and c(9-12).

Its subcellular location is the cellular thylakoid membrane. It carries out the reaction ATP + H2O + 4 H(+)(in) = ADP + phosphate + 5 H(+)(out). Its function is as follows. Produces ATP from ADP in the presence of a proton gradient across the membrane. The alpha chain is a regulatory subunit. The sequence is that of ATP synthase subunit alpha from Synechococcus sp. (strain WH7803).